The following is a 64-amino-acid chain: MKVQELREKNLSELGKELLSLRRAQFGLRLQHRTQQLANVSQINKVRKDIARLKTIIREKTGQL.

The protein belongs to the universal ribosomal protein uL29 family.

This chain is Large ribosomal subunit protein uL29, found in Nitrosomonas europaea (strain ATCC 19718 / CIP 103999 / KCTC 2705 / NBRC 14298).